The sequence spans 573 residues: Chromosomal replication initiator protein DnaA (573 aa).

Residues 1–85 are domain I, interacts with DnaA modulators; it reads MSQNSSSLLE…TKVLSMRMGR (85 aa). The interval 85-231 is domain II; that stretch reads RSFSLAVSVE…TPAHNPNREV (147 aa). A disordered region spans residues 91–232; that stretch reads VSVEPSRDGE…PAHNPNREVS (142 aa). The span at 116–169 shows a compositional bias: low complexity; that stretch reads PYPGQGPQSPQGQQGQQGQHPVQQEVRAHAPAPHQQGQHQAAQHQPPANQAPGQ. The segment covering 178-191 has biased composition (polar residues); it reads QASQSAGAWEQTHS. A compositionally biased stretch (pro residues) spans 202 to 213; sequence SPAPVEPPPQPA. Positions 232–448 are domain III, AAA+ region; that stretch reads SLNPKYTFEN…GALIRVSAYS (217 aa). ATP contacts are provided by Gly276, Gly278, Lys279, and Thr280. Residues 449–573 are domain IV, binds dsDNA; sequence SLINQPIDKE…TQLIKSRGRN (125 aa).

This sequence belongs to the DnaA family. Oligomerizes as a right-handed, spiral filament on DNA at oriC.

It is found in the cytoplasm. Its function is as follows. Plays an essential role in the initiation and regulation of chromosomal replication. ATP-DnaA binds to the origin of replication (oriC) to initiate formation of the DNA replication initiation complex once per cell cycle. Binds the DnaA box (a 9 base pair repeat at the origin) and separates the double-stranded (ds)DNA. Forms a right-handed helical filament on oriC DNA; dsDNA binds to the exterior of the filament while single-stranded (ss)DNA is stabiized in the filament's interior. The ATP-DnaA-oriC complex binds and stabilizes one strand of the AT-rich DNA unwinding element (DUE), permitting loading of DNA polymerase. After initiation quickly degrades to an ADP-DnaA complex that is not apt for DNA replication. Binds acidic phospholipids. The polypeptide is Chromosomal replication initiator protein DnaA (Corynebacterium efficiens (strain DSM 44549 / YS-314 / AJ 12310 / JCM 11189 / NBRC 100395)).